Consider the following 206-residue polypeptide: Octanoyltransferase (206 aa).

Residues 30 to 206 enclose the BPL/LPL catalytic domain; sequence PETNDEIWLV…EFVTLLNNSI (177 aa). Residues 69–76, 137–139, and 150–152 contribute to the substrate site; these read RGGQVTYH, SLG, and GIA. Cys168 acts as the Acyl-thioester intermediate in catalysis.

This sequence belongs to the LipB family.

The protein resides in the cytoplasm. The enzyme catalyses octanoyl-[ACP] + L-lysyl-[protein] = N(6)-octanoyl-L-lysyl-[protein] + holo-[ACP] + H(+). The protein operates within protein modification; protein lipoylation via endogenous pathway; protein N(6)-(lipoyl)lysine from octanoyl-[acyl-carrier-protein]: step 1/2. Its function is as follows. Catalyzes the transfer of endogenously produced octanoic acid from octanoyl-acyl-carrier-protein onto the lipoyl domains of lipoate-dependent enzymes. Lipoyl-ACP can also act as a substrate although octanoyl-ACP is likely to be the physiological substrate. The sequence is that of Octanoyltransferase from Francisella tularensis subsp. mediasiatica (strain FSC147).